The following is a 348-amino-acid chain: UDP-3-O-acylglucosamine N-acyltransferase (348 aa).

His243 acts as the Proton acceptor in catalysis.

Belongs to the transferase hexapeptide repeat family. LpxD subfamily. In terms of assembly, homotrimer.

It catalyses the reaction a UDP-3-O-[(3R)-3-hydroxyacyl]-alpha-D-glucosamine + a (3R)-hydroxyacyl-[ACP] = a UDP-2-N,3-O-bis[(3R)-3-hydroxyacyl]-alpha-D-glucosamine + holo-[ACP] + H(+). It participates in bacterial outer membrane biogenesis; LPS lipid A biosynthesis. Functionally, catalyzes the N-acylation of UDP-3-O-acylglucosamine using 3-hydroxyacyl-ACP as the acyl donor. Is involved in the biosynthesis of lipid A, a phosphorylated glycolipid that anchors the lipopolysaccharide to the outer membrane of the cell. In Hahella chejuensis (strain KCTC 2396), this protein is UDP-3-O-acylglucosamine N-acyltransferase.